The chain runs to 363 residues: Probable aminomethyltransferase (363 aa).

The protein belongs to the GcvT family. The glycine cleavage system is composed of four proteins: P, T, L and H.

The catalysed reaction is N(6)-[(R)-S(8)-aminomethyldihydrolipoyl]-L-lysyl-[protein] + (6S)-5,6,7,8-tetrahydrofolate = N(6)-[(R)-dihydrolipoyl]-L-lysyl-[protein] + (6R)-5,10-methylene-5,6,7,8-tetrahydrofolate + NH4(+). In terms of biological role, the glycine cleavage system catalyzes the degradation of glycine. In Haloarcula marismortui (strain ATCC 43049 / DSM 3752 / JCM 8966 / VKM B-1809) (Halobacterium marismortui), this protein is Probable aminomethyltransferase.